The following is a 187-amino-acid chain: MTDILTNMFTIVAELPLGEEEGFAFNGNILETNLINLAAVIGLLFYSGRSFLTNLLRNREDNILKSIRDADERYKEATEKLQQAKNEFEQAKIEADEIRAQSRITAKEIEVSLMGLVSEDTKRLIDMKQATISFEEEKAINEVRRQVIRLALQRALEQSKNRLNHRLQKRVTRLNIGLLGQLVGVND.

A helical transmembrane segment spans residues 34–56; that stretch reads LINLAAVIGLLFYSGRSFLTNLL.

Belongs to the ATPase B chain family. As to quaternary structure, F-type ATPases have 2 components, F(1) - the catalytic core - and F(0) - the membrane proton channel. F(1) has five subunits: alpha(3), beta(3), gamma(1), delta(1), epsilon(1). F(0) has four main subunits: a(1), b(1), b'(1) and c(10-14). The alpha and beta chains form an alternating ring which encloses part of the gamma chain. F(1) is attached to F(0) by a central stalk formed by the gamma and epsilon chains, while a peripheral stalk is formed by the delta, b and b' chains.

It localises to the plastid. It is found in the chloroplast thylakoid membrane. In terms of biological role, f(1)F(0) ATP synthase produces ATP from ADP in the presence of a proton or sodium gradient. F-type ATPases consist of two structural domains, F(1) containing the extramembraneous catalytic core and F(0) containing the membrane proton channel, linked together by a central stalk and a peripheral stalk. During catalysis, ATP synthesis in the catalytic domain of F(1) is coupled via a rotary mechanism of the central stalk subunits to proton translocation. Component of the F(0) channel, it forms part of the peripheral stalk, linking F(1) to F(0). This is ATP synthase subunit b, chloroplastic from Chlorokybus atmophyticus (Soil alga).